A 307-amino-acid chain; its full sequence is Predicted GPI-anchored protein 44 (307 aa).

The signal sequence occupies residues 1 to 22; the sequence is MLSTNNLLILLIFSFLITNVKS. N-linked (GlcNAc...) asparagine glycosylation is found at Asn146 and Asn217. The disordered stretch occupies residues 232 to 261; that stretch reads TPQPLLETPSQESSAPNIDSTTPTTIDNTV. A compositionally biased stretch (polar residues) spans 239-254; sequence TPSQESSAPNIDSTTP. Gly286 is lipidated: GPI-anchor amidated glycine. Positions 287-307 are cleaved as a propeptide — removed in mature form; it reads GAMGYPSISVALGLVFIAYLV.

Its subcellular location is the cell membrane. The polypeptide is Predicted GPI-anchored protein 44 (PGA44) (Candida albicans (strain SC5314 / ATCC MYA-2876) (Yeast)).